The sequence spans 288 residues: Diaminopimelate epimerase (288 aa).

Residues Asn-14 and Asn-67 each contribute to the substrate site. Cys-76 (proton donor) is an active-site residue. Residues 77–78, Asn-166, Asn-199, and 217–218 contribute to the substrate site; these read GN and ER. Cys-226 serves as the catalytic Proton acceptor. 227-228 lines the substrate pocket; the sequence is GT.

The protein belongs to the diaminopimelate epimerase family. Homodimer.

It localises to the cytoplasm. The catalysed reaction is (2S,6S)-2,6-diaminopimelate = meso-2,6-diaminopimelate. The protein operates within amino-acid biosynthesis; L-lysine biosynthesis via DAP pathway; DL-2,6-diaminopimelate from LL-2,6-diaminopimelate: step 1/1. Catalyzes the stereoinversion of LL-2,6-diaminopimelate (L,L-DAP) to meso-diaminopimelate (meso-DAP), a precursor of L-lysine and an essential component of the bacterial peptidoglycan. The sequence is that of Diaminopimelate epimerase from Bacillus cereus (strain B4264).